The chain runs to 623 residues: Lethal(3)malignant brain tumor-like protein 4 (623 aa).

Residues 1-44 (MKQPNRKRKLNMDSKERLDQDGRLEQAEEEKKPKDSTTPLSHVP) form a disordered region. Residues 10-35 (LNMDSKERLDQDGRLEQAEEEKKPKD) are compositionally biased toward basic and acidic residues. MBT repeat units follow at residues 52–152 (WSWE…LHIP), 160–260 (FVWM…LIAP), and 269–364 (FSWT…LEVP). Residues 370 to 414 (LKILPGQAVCPTPGCRGIGHIRGPRYSGHHSAFGCPYSDMNLKKE) form a CCHHC-type zinc finger. Residues C379, C384, H398, and C404 each contribute to the Zn(2+) site. In terms of domain architecture, SAM spans 543–607 (WTVDEVAEFV…YNSILMFRHS (65 aa)).

It is found in the nucleus. In terms of biological role, putative Polycomb group (PcG) protein. PcG proteins maintain the transcriptionally repressive state of genes, probably via a modification of chromatin, rendering it heritably changed in its expressibility. This is Lethal(3)malignant brain tumor-like protein 4 (L3MBTL4) from Homo sapiens (Human).